The chain runs to 429 residues: MPIIEQVGAREILDSRGNPTVEVEIALTDGTFARAAVPSGASTGEHEAVELRDGGERYGGKGVQKAVQAVLDEIGPAVIGLNADDQRLVDQALVDLDGTPDKSRLGGNAILGVSLAVAKAAADSAELPLFRYLGGPNAHILPVPMMNILNGGAHADTAVDIQEFMVAPIGAPSFAEALRWGAEVYHSLKSVLKKEGLSTGLGDEGGFAPDVAGTTAALDLIGRAIESAGFKLGTDVALALDAAATEFYSDGTGYKFEGSTRTAEQMAEFYAGLLGAYPLVSIEDPLSEDDWDGWAALTASIGDRVQLVGDDVFVTNPERLEEGIEKGVANALLVKVNQIGTLTETLDAVALAHHSGYRTMMSHRSGETEDTTIADLAVAVGSGQIKTGAPARSERVAKYNQLLRIEEALGDAARYAGDLAFPRFALETR.

A (2R)-2-phosphoglycerate-binding site is contributed by Gln-162. Glu-204 serves as the catalytic Proton donor. Residues Asp-241, Glu-283, and Asp-310 each contribute to the Mg(2+) site. (2R)-2-phosphoglycerate-binding residues include Lys-335, Arg-364, Ser-365, and Lys-386. Lys-335 serves as the catalytic Proton acceptor.

It belongs to the enolase family. It depends on Mg(2+) as a cofactor.

It is found in the cytoplasm. The protein localises to the secreted. Its subcellular location is the cell surface. The catalysed reaction is (2R)-2-phosphoglycerate = phosphoenolpyruvate + H2O. The protein operates within carbohydrate degradation; glycolysis; pyruvate from D-glyceraldehyde 3-phosphate: step 4/5. Catalyzes the reversible conversion of 2-phosphoglycerate (2-PG) into phosphoenolpyruvate (PEP). It is essential for the degradation of carbohydrates via glycolysis. The chain is Enolase from Mycobacterium avium (strain 104).